Consider the following 396-residue polypeptide: Elongation factor Tu (396 aa).

Residues 11-205 form the tr-type G domain; the sequence is KPHVNIGTIG…VIDEYIPTPV (195 aa). The segment at 20 to 27 is G1; the sequence is GHVDHGKT. 20-27 is a binding site for GTP; that stretch reads GHVDHGKT. Threonine 27 serves as a coordination point for Mg(2+). A G2 region spans residues 61–65; the sequence is GITIN. A G3 region spans residues 82-85; the sequence is DAPG. Residues 82–86 and 137–140 each bind GTP; these read DAPGH and NKTD. The interval 137–140 is G4; the sequence is NKTD. The G5 stretch occupies residues 175 to 177; it reads SAL.

Belongs to the TRAFAC class translation factor GTPase superfamily. Classic translation factor GTPase family. EF-Tu/EF-1A subfamily. In terms of assembly, monomer.

Its subcellular location is the cytoplasm. It carries out the reaction GTP + H2O = GDP + phosphate + H(+). GTP hydrolase that promotes the GTP-dependent binding of aminoacyl-tRNA to the A-site of ribosomes during protein biosynthesis. In Oenococcus oeni (strain ATCC BAA-331 / PSU-1), this protein is Elongation factor Tu.